Here is a 60-residue protein sequence, read N- to C-terminus: Protein translocase subunit SecE (60 aa).

Residues 31–51 traverse the membrane as a helical segment; it reads VIVVSTVIFFLVFFYALDLGI.

It belongs to the SecE/SEC61-gamma family. As to quaternary structure, component of the Sec protein translocase complex. Heterotrimer consisting of SecY, SecE and SecG subunits. The heterotrimers can form oligomers, although 1 heterotrimer is thought to be able to translocate proteins. Interacts with the ribosome. Interacts with SecDF, and other proteins may be involved. Interacts with SecA.

It is found in the cell membrane. Functionally, essential subunit of the Sec protein translocation channel SecYEG. Clamps together the 2 halves of SecY. May contact the channel plug during translocation. This Staphylococcus aureus (strain Mu50 / ATCC 700699) protein is Protein translocase subunit SecE.